The sequence spans 438 residues: Trigger factor (438 aa).

One can recognise a PPIase FKBP-type domain in the interval Asp-160–Pro-245.

The protein belongs to the FKBP-type PPIase family. Tig subfamily.

Its subcellular location is the cytoplasm. The enzyme catalyses [protein]-peptidylproline (omega=180) = [protein]-peptidylproline (omega=0). Its function is as follows. Involved in protein export. Acts as a chaperone by maintaining the newly synthesized protein in an open conformation. Functions as a peptidyl-prolyl cis-trans isomerase. This Francisella tularensis subsp. mediasiatica (strain FSC147) protein is Trigger factor.